Reading from the N-terminus, the 101-residue chain is Small ribosomal subunit protein uS14 (101 aa).

Belongs to the universal ribosomal protein uS14 family. In terms of assembly, part of the 30S ribosomal subunit. Contacts proteins S3 and S10.

Functionally, binds 16S rRNA, required for the assembly of 30S particles and may also be responsible for determining the conformation of the 16S rRNA at the A site. The chain is Small ribosomal subunit protein uS14 from Protochlamydia amoebophila (strain UWE25).